A 216-amino-acid polypeptide reads, in one-letter code: Probable RNA 2'-phosphotransferase 1 (216 aa).

This sequence belongs to the KptA/TPT1 family.

Its function is as follows. Removes the 2'-phosphate from RNA via an intermediate in which the phosphate is ADP-ribosylated by NAD followed by a presumed transesterification to release the RNA and generate ADP-ribose 1''-2''-cyclic phosphate (APPR&gt;P). May function as an ADP-ribosylase. In Archaeoglobus fulgidus (strain ATCC 49558 / DSM 4304 / JCM 9628 / NBRC 100126 / VC-16), this protein is Probable RNA 2'-phosphotransferase 1 (kptA1).